A 405-amino-acid chain; its full sequence is Protein PAG1 (405 aa).

An N-terminal signal peptide occupies residues 1 to 50 (MVSLIILFRLTFAIANRVRTLMKVLVIVSFFVLTGSASADSGALSLSGAA). 4 N-linked (GlcNAc...) asparagine glycosylation sites follow: Asn55, Asn104, Asn256, and Asn351. Residue Ala391 is the site of GPI-anchor amidated alanine attachment. The propeptide at 392 to 405 (DSLRRTLALLFLLF) is removed in mature form.

The protein localises to the cell membrane. The sequence is that of Protein PAG1 (PAG1) from Trypanosoma brucei brucei.